Here is a 319-residue protein sequence, read N- to C-terminus: Pantothenate kinase (319 aa).

Position 101-108 (101-108) interacts with ATP; it reads GSVAVGKS.

Belongs to the prokaryotic pantothenate kinase family.

It localises to the cytoplasm. It carries out the reaction (R)-pantothenate + ATP = (R)-4'-phosphopantothenate + ADP + H(+). Its pathway is cofactor biosynthesis; coenzyme A biosynthesis; CoA from (R)-pantothenate: step 1/5. This is Pantothenate kinase from Clavibacter sepedonicus (Clavibacter michiganensis subsp. sepedonicus).